The sequence spans 620 residues: Endoglucanase 6 (620 aa).

The first 22 residues, 1–22, serve as a signal peptide directing secretion; sequence MEKFAPVAALLLLLLCFPVAFS. Asp-78 functions as the Nucleophile in the catalytic mechanism. Catalysis depends on residues His-411, Asp-463, and Glu-472. N-linked (GlcNAc...) asparagine glycosylation is found at Asn-554 and Asn-564.

The protein belongs to the glycosyl hydrolase 9 (cellulase E) family.

It is found in the secreted. The enzyme catalyses Endohydrolysis of (1-&gt;4)-beta-D-glucosidic linkages in cellulose, lichenin and cereal beta-D-glucans.. The polypeptide is Endoglucanase 6 (Arabidopsis thaliana (Mouse-ear cress)).